The sequence spans 346 residues: D-alanine--D-alanine ligase (346 aa).

Residues 133–327 form the ATP-grasp domain; that stretch reads KLYAKSVGVK…TLADQIPLEK (195 aa). 159-211 provides a ligand contact to ATP; sequence LRFPCIIKPARLGSSIGISIVKDEKDLEYAKDVGFEFDNDLVVEEFKNNIKEY. Positions 284, 296, and 298 each coordinate Mg(2+).

This sequence belongs to the D-alanine--D-alanine ligase family. It depends on Mg(2+) as a cofactor. Requires Mn(2+) as cofactor.

The protein resides in the cytoplasm. The catalysed reaction is 2 D-alanine + ATP = D-alanyl-D-alanine + ADP + phosphate + H(+). It participates in cell wall biogenesis; peptidoglycan biosynthesis. Its function is as follows. Cell wall formation. The sequence is that of D-alanine--D-alanine ligase from Campylobacter jejuni subsp. doylei (strain ATCC BAA-1458 / RM4099 / 269.97).